The chain runs to 478 residues: Sialidase-4 (478 aa).

The short motif at 22–25 (YRVP) is the FRIP motif element. 2 residues coordinate substrate: Arg23 and Arg43. Catalysis depends on proton acceptor residues Asp47 and Asp48. The BNR 1 repeat unit spans residues 127–138 (VTSCDAGLTWGS). Residues Tyr177 and Tyr179 each contribute to the substrate site. Residues 200–211 (FYSDDHGISWHC) form a BNR 2 repeat. Residues Glu222 and Arg238 each contribute to the substrate site. A BNR 3 repeat occupies 247 to 258 (ALSADEGTSFLP). 2 disordered regions span residues 285–307 (IEPQ…CFNL) and 335–359 (SRSP…PECP). Arg383 contributes to the substrate binding site. Tyr413 serves as the catalytic Nucleophile. Glu434 is an active-site residue.

Belongs to the glycosyl hydrolase 33 family. Highly expressed in brain, particularly in hippocampus, and at lower levels in liver and spleen. Expressed in hippocampal neurons (at protein level).

It is found in the cell membrane. Its subcellular location is the endoplasmic reticulum membrane. The protein localises to the microsome membrane. It localises to the mitochondrion inner membrane. The protein resides in the mitochondrion outer membrane. It is found in the cell projection. Its subcellular location is the neuron projection. The protein localises to the lysosome lumen. The catalysed reaction is Hydrolysis of alpha-(2-&gt;3)-, alpha-(2-&gt;6)-, alpha-(2-&gt;8)- glycosidic linkages of terminal sialic acid residues in oligosaccharides, glycoproteins, glycolipids, colominic acid and synthetic substrates.. It catalyses the reaction a ganglioside GM3 + H2O = a beta-D-galactosyl-(1-&gt;4)-beta-D-glucosyl-(1&lt;-&gt;1)-ceramide + N-acetylneuraminate. It carries out the reaction a ganglioside GM3 (d18:1(4E)) + H2O = a beta-D-Gal-(1-&gt;4)-beta-D-Glc-(1&lt;-&gt;1)-Cer(d18:1(4E)) + N-acetylneuraminate. The enzyme catalyses a ganglioside GM2 + H2O = a ganglioside GA2 + N-acetylneuraminate. The catalysed reaction is a ganglioside GM2 (d18:1(4E)) + H2O = a ganglioside GA2 (d18:1(4E)) + N-acetylneuraminate. It catalyses the reaction a ganglioside GD1a + H2O = a ganglioside GM1 + N-acetylneuraminate. It carries out the reaction a ganglioside GD1a (d18:1(4E)) + H2O = a ganglioside GM1 (d18:1(4E)) + N-acetylneuraminate. The enzyme catalyses a ganglioside GD3 + H2O = a ganglioside GM3 + N-acetylneuraminate. The catalysed reaction is a ganglioside GD3 (d18:1(4E)) + H2O = a ganglioside GM3 (d18:1(4E)) + N-acetylneuraminate. In terms of biological role, exo-alpha-sialidase that catalyzes the hydrolytic cleavage of the terminal sialic acid (N-acetylneuraminic acid, Neu5Ac) of a glycan moiety in the catabolism of glycolipids, glycoproteins and oligosacharides. Efficiently hydrolyzes gangliosides including alpha-(2-&gt;3)-sialylated GD1a and GM3 and alpha-(2-&gt;8)-sialylated GD3. Hydrolyzes poly-alpha-(2-&gt;8)-sialylated neural cell adhesion molecule NCAM1 likely at growth cones, suppressing neurite outgrowth in hippocampal neurons. May desialylate sialyl Lewis A and X antigens at the cell surface, down-regulating these glycan epitopes recognized by SELE/E selectin in the initiation of cell adhesion and extravasation. Has sialidase activity toward mucin, fetuin and sialyllactose. The polypeptide is Sialidase-4 (Neu4) (Mus musculus (Mouse)).